The sequence spans 323 residues: Flavone synthase cfoJ (323 aa).

Requires FMN as cofactor.

The protein operates within secondary metabolite biosynthesis; flavonoid biosynthesis. FMN-dependent oxidoreductase; part of the gene cluster that mediates the biosynthesis of chlorflavonin, a fungal flavonoid with acetolactate synthase inhibitory activity. Within the pathway, cfoJ acts as a flavone synthase (FNS) and catalyzes the formation of a double bond between C2 and C3, converting the flavanone into a flavone. The pathway begins with the PKS-NRPS hybrid synthetase cfoA that uses benzoic acid or p-hydroxybenzoic acid as a starter unit with four rounds of chain elongation using malonyl-CoA to form the chalcone skeleton. Then, a new type of chalcone isomerase, cfoK, catalyzes the conversion of the chalcone into a flavanone by a histidine-mediated oxa-Michael addition mechanism. The desaturation of flavanone to flavone is catalyzed by a new type of flavone synthase, the flavin mononucleotide (FMN)-dependent oxidoreductase cfoJ. Monooxygenases cfoF, cfoG, and P450 cfoH are responsible for the hydroxylation of the flavonoid skeleton at sites C3, C8, and C2', respectively. Like cfoF, the dehydratase cfoI plays also a role in the hydroxylation of position C3. Methyltransferases cfoB, cfoC, and cfoD then catalyze the methylation of C7-OH, C8-OH, and C3-OH, respectively. Finally, the monooxygenase cfoE is responsible for the chlorination of flavonoid at position C3'. This Aspergillus candidus protein is Flavone synthase cfoJ.